The following is a 149-amino-acid chain: Ribonuclease H (149 aa).

The RNase H type-1 domain occupies 1–142 (MSTITIHTDG…ADELAREGLA (142 aa)). 4 residues coordinate Mg(2+): Asp-9, Glu-47, Asp-70, and Asp-134. Positions 124 to 149 (HAGDPGNERADELAREGLAEARGRQP) are disordered. Residues 129–149 (GNERADELAREGLAEARGRQP) are compositionally biased toward basic and acidic residues.

It belongs to the RNase H family. Monomer. Mg(2+) is required as a cofactor.

The protein localises to the cytoplasm. It catalyses the reaction Endonucleolytic cleavage to 5'-phosphomonoester.. Its function is as follows. Endonuclease that specifically degrades the RNA of RNA-DNA hybrids. This Maricaulis maris (strain MCS10) (Caulobacter maris) protein is Ribonuclease H.